The primary structure comprises 554 residues: Glutamine--tRNA ligase (554 aa).

The 'HIGH' region signature appears at 34–44 (PEPNGYLHIGH). ATP-binding positions include 35–37 (EPN) and 41–47 (HIGHAKS). Positions 67 and 212 each coordinate L-glutamine. Residues threonine 231, 261 to 262 (RL), and 269 to 271 (MSK) each bind ATP. The short motif at 268–272 (VMSKR) is the 'KMSKS' region element.

The protein belongs to the class-I aminoacyl-tRNA synthetase family. Monomer.

The protein localises to the cytoplasm. The catalysed reaction is tRNA(Gln) + L-glutamine + ATP = L-glutaminyl-tRNA(Gln) + AMP + diphosphate. The protein is Glutamine--tRNA ligase of Shigella boydii serotype 4 (strain Sb227).